Here is a 501-residue protein sequence, read N- to C-terminus: UDP-N-acetylmuramate--L-alanine ligase (501 aa).

Residue 130 to 136 (GTHGKTS) coordinates ATP.

This sequence belongs to the MurCDEF family.

Its subcellular location is the cytoplasm. It carries out the reaction UDP-N-acetyl-alpha-D-muramate + L-alanine + ATP = UDP-N-acetyl-alpha-D-muramoyl-L-alanine + ADP + phosphate + H(+). Its pathway is cell wall biogenesis; peptidoglycan biosynthesis. Functionally, cell wall formation. The protein is UDP-N-acetylmuramate--L-alanine ligase of Nocardia farcinica (strain IFM 10152).